The chain runs to 40 residues: Photosystem II reaction center protein J (40 aa).

Residues 8–28 form a helical membrane-spanning segment; it reads IPLWLVGTVAGILVIGLIGIF.

It belongs to the PsbJ family. In terms of assembly, PSII is composed of 1 copy each of membrane proteins PsbA, PsbB, PsbC, PsbD, PsbE, PsbF, PsbH, PsbI, PsbJ, PsbK, PsbL, PsbM, PsbT, PsbX, PsbY, PsbZ, Psb30/Ycf12, at least 3 peripheral proteins of the oxygen-evolving complex and a large number of cofactors. It forms dimeric complexes.

Its subcellular location is the plastid. The protein resides in the chloroplast thylakoid membrane. Its function is as follows. One of the components of the core complex of photosystem II (PSII). PSII is a light-driven water:plastoquinone oxidoreductase that uses light energy to abstract electrons from H(2)O, generating O(2) and a proton gradient subsequently used for ATP formation. It consists of a core antenna complex that captures photons, and an electron transfer chain that converts photonic excitation into a charge separation. This Gnetum parvifolium (Small-leaved jointfir) protein is Photosystem II reaction center protein J.